The following is a 216-amino-acid chain: Uracil phosphoribosyltransferase (216 aa).

5-phospho-alpha-D-ribose 1-diphosphate contacts are provided by residues Arg-85, Arg-110, and 135–143; that span reads DPMVATGYS. Uracil contacts are provided by residues Ile-200 and 205–207; that span reads GDA. Asp-206 contacts 5-phospho-alpha-D-ribose 1-diphosphate.

Belongs to the UPRTase family. Mg(2+) serves as cofactor.

It catalyses the reaction UMP + diphosphate = 5-phospho-alpha-D-ribose 1-diphosphate + uracil. Its pathway is pyrimidine metabolism; UMP biosynthesis via salvage pathway; UMP from uracil: step 1/1. Its activity is regulated as follows. Allosterically activated by GTP. In terms of biological role, catalyzes the conversion of uracil and 5-phospho-alpha-D-ribose 1-diphosphate (PRPP) to UMP and diphosphate. The protein is Uracil phosphoribosyltransferase of Burkholderia lata (strain ATCC 17760 / DSM 23089 / LMG 22485 / NCIMB 9086 / R18194 / 383).